The chain runs to 658 residues: Cysteine-rich receptor-like protein kinase 36 (658 aa).

Positions Met-1 to Thr-26 are cleaved as a signal peptide. 2 consecutive Gnk2-homologous domains span residues Thr-27 to Arg-128 and Asn-139 to Phe-246. The Extracellular portion of the chain corresponds to Thr-27–Ser-281. N-linked (GlcNAc...) asparagine glycans are attached at residues Asn-38, Asn-64, Asn-116, Asn-150, and Asn-163. A helical transmembrane segment spans residues Val-282–Ala-302. At Tyr-303–Arg-658 the chain is on the cytoplasmic side. In terms of domain architecture, Protein kinase spans Phe-340–Phe-612. ATP is bound by residues Leu-346–Val-354 and Lys-368. Tyr-413 is subject to Phosphotyrosine. Asp-465 acts as the Proton acceptor in catalysis. The residue at position 469 (Ser-469) is a Phosphoserine. Thr-505 carries the post-translational modification Phosphothreonine. Tyr-513 is modified (phosphotyrosine).

Belongs to the protein kinase superfamily. Ser/Thr protein kinase family. CRK subfamily. In terms of assembly, interacts with CRK45. Post-translationally, autophosphorylated.

It is found in the cell membrane. The enzyme catalyses L-seryl-[protein] + ATP = O-phospho-L-seryl-[protein] + ADP + H(+). The catalysed reaction is L-threonyl-[protein] + ATP = O-phospho-L-threonyl-[protein] + ADP + H(+). In terms of biological role, forms a complex with CRK45 that may negatively control abscisic acid (ABA) and osmotic stress signal transduction. Can phosphorylate CRK45 in vitro. The polypeptide is Cysteine-rich receptor-like protein kinase 36 (Arabidopsis thaliana (Mouse-ear cress)).